A 150-amino-acid chain; its full sequence is Large ribosomal subunit protein bL9 (150 aa).

The protein belongs to the bacterial ribosomal protein bL9 family.

In terms of biological role, binds to the 23S rRNA. The sequence is that of Large ribosomal subunit protein bL9 from Hamiltonella defensa subsp. Acyrthosiphon pisum (strain 5AT).